The sequence spans 269 residues: Small ribosomal subunit protein eS1 (269 aa).

The interval 1-20 (MAVGKNKGVSKGGKKGSKKK) is disordered.

It belongs to the eukaryotic ribosomal protein eS1 family. In terms of assembly, component of the small ribosomal subunit. Mature ribosomes consist of a small (40S) and a large (60S) subunit. The 40S subunit contains about 33 different proteins and 1 molecule of RNA (18S). The 60S subunit contains about 49 different proteins and 3 molecules of RNA (28S, 5.8S and 5S).

The protein resides in the cytoplasm. Its function is as follows. Has an essential role in oogenesis. In Anopheles gambiae (African malaria mosquito), this protein is Small ribosomal subunit protein eS1.